The chain runs to 380 residues: Succinyl-diaminopimelate desuccinylase (380 aa).

Histidine 69 provides a ligand contact to Zn(2+). Aspartate 71 is an active-site residue. Position 102 (aspartate 102) interacts with Zn(2+). Glutamate 135 (proton acceptor) is an active-site residue. Zn(2+)-binding residues include glutamate 136, glutamate 164, and histidine 353.

Belongs to the peptidase M20A family. DapE subfamily. In terms of assembly, homodimer. The cofactor is Zn(2+). Co(2+) serves as cofactor.

The catalysed reaction is N-succinyl-(2S,6S)-2,6-diaminopimelate + H2O = (2S,6S)-2,6-diaminopimelate + succinate. It participates in amino-acid biosynthesis; L-lysine biosynthesis via DAP pathway; LL-2,6-diaminopimelate from (S)-tetrahydrodipicolinate (succinylase route): step 3/3. In terms of biological role, catalyzes the hydrolysis of N-succinyl-L,L-diaminopimelic acid (SDAP), forming succinate and LL-2,6-diaminopimelate (DAP), an intermediate involved in the bacterial biosynthesis of lysine and meso-diaminopimelic acid, an essential component of bacterial cell walls. This is Succinyl-diaminopimelate desuccinylase from Cereibacter sphaeroides (strain KD131 / KCTC 12085) (Rhodobacter sphaeroides).